We begin with the raw amino-acid sequence, 678 residues long: Glutamate--cysteine ligase (678 aa).

It belongs to the glutamate--cysteine ligase type 3 family.

It carries out the reaction L-cysteine + L-glutamate + ATP = gamma-L-glutamyl-L-cysteine + ADP + phosphate + H(+). It functions in the pathway sulfur metabolism; glutathione biosynthesis; glutathione from L-cysteine and L-glutamate: step 1/2. Its activity is regulated as follows. Feedback inhibition by glutathione. In terms of biological role, catalyzes the ATP-dependent condensation of cysteine and glutamate to form the dipeptide gamma-glutamylcysteine (gamma-GC), the first and rate-limiting step in the production of glutathione (GSH). In Saccharomyces cerevisiae (strain ATCC 204508 / S288c) (Baker's yeast), this protein is Glutamate--cysteine ligase (GSH1).